The primary structure comprises 167 residues: uncharacterized protein (167 aa).

This is an uncharacterized protein from Escherichia coli (strain K12).